A 415-amino-acid polypeptide reads, in one-letter code: uncharacterized protein (415 aa).

Disordered regions lie at residues 39–77 (FLPPSSNTTLQKESQEGSPPPTQSQEPLKPMENVSRPIH), 220–247 (AEDKETTSKGSNAKEESKNGLHPKHPLT), and 346–415 (VTLN…NGSK). Composition is skewed to basic and acidic residues over residues 220 to 238 (AEDKETTSKGSNAKEESKN), 365 to 380 (DVNKDPKLNLCPDKHM), and 400 to 415 (SKTEKIYPEPRRNGSK).

This is an uncharacterized protein from Rattus norvegicus (Rat).